A 359-amino-acid chain; its full sequence is Probable deacetylase AF_0130 (359 aa).

Catalysis depends on histidine 126, which acts as the Proton donor/acceptor. Residues aspartate 162, histidine 164, and aspartate 249 each contribute to the Zn(2+) site.

The protein belongs to the histone deacetylase family. It depends on Zn(2+) as a cofactor.

Probable deacetylase. This is Probable deacetylase AF_0130 from Archaeoglobus fulgidus (strain ATCC 49558 / DSM 4304 / JCM 9628 / NBRC 100126 / VC-16).